A 291-amino-acid chain; its full sequence is N-acetylmannosamine kinase (291 aa).

ATP is bound by residues 5–12 and 132–139; these read AIDIGGTK and GVGGGVVC. Zn(2+)-binding residues include His156, Cys166, Cys168, and Cys173.

Belongs to the ROK (NagC/XylR) family. NanK subfamily. In terms of assembly, homodimer.

It carries out the reaction an N-acyl-D-mannosamine + ATP = an N-acyl-D-mannosamine 6-phosphate + ADP + H(+). The protein operates within amino-sugar metabolism; N-acetylneuraminate degradation; D-fructose 6-phosphate from N-acetylneuraminate: step 2/5. Functionally, catalyzes the phosphorylation of N-acetylmannosamine (ManNAc) to ManNAc-6-P. In Salmonella agona (strain SL483), this protein is N-acetylmannosamine kinase.